A 486-amino-acid chain; its full sequence is UDP-N-acetylmuramate--L-alanine ligase (486 aa).

Residue 129–135 participates in ATP binding; sequence GTHGKTT.

Belongs to the MurCDEF family.

It is found in the cytoplasm. It carries out the reaction UDP-N-acetyl-alpha-D-muramate + L-alanine + ATP = UDP-N-acetyl-alpha-D-muramoyl-L-alanine + ADP + phosphate + H(+). It participates in cell wall biogenesis; peptidoglycan biosynthesis. Its function is as follows. Cell wall formation. The sequence is that of UDP-N-acetylmuramate--L-alanine ligase from Vibrio cholerae serotype O1 (strain ATCC 39315 / El Tor Inaba N16961).